Consider the following 258-residue polypeptide: UPF0246 protein YaaA (258 aa).

Belongs to the UPF0246 family.

This is UPF0246 protein YaaA from Escherichia coli O8 (strain IAI1).